The chain runs to 285 residues: 2,3,4,5-tetrahydropyridine-2,6-dicarboxylate N-succinyltransferase (285 aa).

Substrate contacts are provided by arginine 111 and aspartate 148.

The protein belongs to the transferase hexapeptide repeat family. As to quaternary structure, homotrimer.

The protein localises to the cytoplasm. The catalysed reaction is (S)-2,3,4,5-tetrahydrodipicolinate + succinyl-CoA + H2O = (S)-2-succinylamino-6-oxoheptanedioate + CoA. It functions in the pathway amino-acid biosynthesis; L-lysine biosynthesis via DAP pathway; LL-2,6-diaminopimelate from (S)-tetrahydrodipicolinate (succinylase route): step 1/3. This chain is 2,3,4,5-tetrahydropyridine-2,6-dicarboxylate N-succinyltransferase, found in Rhizobium rhizogenes (strain K84 / ATCC BAA-868) (Agrobacterium radiobacter).